Here is a 369-residue protein sequence, read N- to C-terminus: MSQASALRAPTPQALPPMAREQALRPDVNEAHVRFIGLGKTYPGQAQPALQGIDLNIRHGEIFGIIGRSGAGKSSLLRTINRLEQPSQGRVLIDQVDIAPFNEDQLVALRRRIGMIFQHFNLMSAKTVWQNVELPLKVAGVAKAERQRKVRELLELVGLQEKHHVYPAQLSGGQKQRVGIARALVHTPEILLCDEATSALDPETTASILELLRDINQRLGLTIVLITHEMAVIRDICHRVVVLERGAVVEQGEVWRVFGSPRHEVTRTLLAPLQAKLPAALQASLQAHPASGNSAVVLKLTVLGEPELSALFNDLGGRVRLLQGGVETIGEHALGQLILSVQHSPHDTHQLLERARRWAEDVEVLGHVD.

Residues 33–270 enclose the ABC transporter domain; that stretch reads VRFIGLGKTY…PRHEVTRTLL (238 aa). 67–74 is an ATP binding site; that stretch reads GRSGAGKS.

It belongs to the ABC transporter superfamily. Methionine importer (TC 3.A.1.24) family. In terms of assembly, the complex is composed of two ATP-binding proteins (MetN), two transmembrane proteins (MetI) and a solute-binding protein (MetQ).

The protein localises to the cell inner membrane. It catalyses the reaction L-methionine(out) + ATP + H2O = L-methionine(in) + ADP + phosphate + H(+). It carries out the reaction D-methionine(out) + ATP + H2O = D-methionine(in) + ADP + phosphate + H(+). Functionally, part of the ABC transporter complex MetNIQ involved in methionine import. Responsible for energy coupling to the transport system. This is Methionine import ATP-binding protein MetN 2 from Pseudomonas putida (strain ATCC 47054 / DSM 6125 / CFBP 8728 / NCIMB 11950 / KT2440).